The primary structure comprises 497 residues: L-amino-acid oxidase BjussuLAAO-I (497 aa).

An N-terminal signal peptide occupies residues 1–13 (MNVFFMFSKPGKL). A disulfide bond links Cys23 and Cys186. Residues 56-57 (MS), 76-77 (EA), 76-80 (EASER), Gln84, and 100-103 (GPMR) contribute to the FAD site. Arg103 contacts substrate. A glycan (N-linked (GlcNAc...) asparagine) is linked at Asn185. His236 provides a ligand contact to substrate. Val274 lines the FAD pocket. Cys344 and Cys425 are joined by a disulfide. Tyr385 is a binding site for substrate. FAD contacts are provided by residues Glu470, 477 to 482 (GWIAST), and 478 to 482 (WIAST). Position 477-478 (477-478 (GW)) interacts with substrate.

The protein belongs to the flavin monoamine oxidase family. FIG1 subfamily. Homodimer; non-covalently linked. FAD is required as a cofactor. In terms of tissue distribution, expressed by the venom gland.

The protein resides in the secreted. The enzyme catalyses an L-alpha-amino acid + O2 + H2O = a 2-oxocarboxylate + H2O2 + NH4(+). The catalysed reaction is L-leucine + O2 + H2O = 4-methyl-2-oxopentanoate + H2O2 + NH4(+). It carries out the reaction L-phenylalanine + O2 + H2O = 3-phenylpyruvate + H2O2 + NH4(+). It catalyses the reaction L-tryptophan + O2 + H2O = indole-3-pyruvate + H2O2 + NH4(+). The enzyme catalyses L-methionine + O2 + H2O = 4-methylsulfanyl-2-oxobutanoate + H2O2 + NH4(+). The catalysed reaction is L-isoleucine + O2 + H2O = (S)-3-methyl-2-oxopentanoate + H2O2 + NH4(+). It carries out the reaction L-tyrosine + O2 + H2O = 3-(4-hydroxyphenyl)pyruvate + H2O2 + NH4(+). It catalyses the reaction L-cysteine + O2 + H2O = 2-oxo-3-sulfanylpropanoate + H2O2 + NH4(+). Functionally, catalyzes an oxidative deamination of predominantly hydrophobic and aromatic L-amino acids, thus producing hydrogen peroxide that may contribute to the diverse toxic effects of this enzyme. Shows high specificity for L-Met, L-Leu, L-Phe, L-Tyr, L-Ile, L-Trp, a moderate activity on L-Cys and low activity on L-Val, L-Lys, L-Arg, L-His, L-Gln, L-Thr and L-Ser. Exhibits diverse biological activities, such as hemorrhage, hemolysis, edema, apoptosis of vascular endothelial cells or tumor cell lines, and antibacterial, as well as regulation of platelet aggregation. Effects of snake L-amino oxidases on platelets are controversial, since they either induce aggregation or inhibit agonist-induced aggregation. These different effects are probably due to different experimental conditions. In vitro, shows parasiticidal activities against both trypanosomes and leishmania, as a result of enzyme-catalyzed hydrogen peroxide production. The sequence is that of L-amino-acid oxidase BjussuLAAO-I from Bothrops jararacussu (Jararacussu).